A 132-amino-acid polypeptide reads, in one-letter code: Fumarate reductase subunit C (132 aa).

3 helical membrane-spanning segments follow: residues 36-56 (AIPT…LGSL), 70-90 (IVII…VTYY), and 110-130 (IITM…LVFM).

The protein belongs to the FrdC family. Part of an enzyme complex containing four subunits: a flavoprotein (FrdA), an iron-sulfur protein (FrdB), and two hydrophobic anchor proteins (FrdC and FrdD).

Its subcellular location is the cell inner membrane. Functionally, anchors the catalytic components of the fumarate reductase complex to the cell membrane, binds quinones. This is Fumarate reductase subunit C from Pasteurella multocida (strain Pm70).